The following is a 264-amino-acid chain: Ribonuclease HII (264 aa).

Residues 33–224 (GPVAGVDEVG…VRRVASGSNT (192 aa)) form the RNase H type-2 domain. Aspartate 39, glutamate 40, and aspartate 133 together coordinate a divalent metal cation. A disordered region spans residues 222-264 (SNTAEVADGQPDPRDGTAQTGEGRWSKSSHPATMRATGRAQGT).

It belongs to the RNase HII family. Mn(2+) is required as a cofactor. It depends on Mg(2+) as a cofactor.

It localises to the cytoplasm. It carries out the reaction Endonucleolytic cleavage to 5'-phosphomonoester.. In terms of biological role, endonuclease that specifically degrades the RNA of RNA-DNA hybrids. This chain is Ribonuclease HII, found in Mycobacterium bovis (strain BCG / Pasteur 1173P2).